Here is a 642-residue protein sequence, read N- to C-terminus: Threonine--tRNA ligase (642 aa).

In terms of domain architecture, TGS spans M1–D61. The tract at residues D243–P534 is catalytic. Zn(2+) is bound by residues C334, H385, and H511.

It belongs to the class-II aminoacyl-tRNA synthetase family. As to quaternary structure, homodimer. It depends on Zn(2+) as a cofactor.

Its subcellular location is the cytoplasm. It catalyses the reaction tRNA(Thr) + L-threonine + ATP = L-threonyl-tRNA(Thr) + AMP + diphosphate + H(+). Functionally, catalyzes the attachment of threonine to tRNA(Thr) in a two-step reaction: L-threonine is first activated by ATP to form Thr-AMP and then transferred to the acceptor end of tRNA(Thr). Also edits incorrectly charged L-seryl-tRNA(Thr). This is Threonine--tRNA ligase from Buchnera aphidicola subsp. Acyrthosiphon pisum (strain 5A).